We begin with the raw amino-acid sequence, 381 residues long: Ecotin-like protein 3 (381 aa).

The tract at residues 232-381 (EHLEVCPKNN…GSKADPVDGK (150 aa)) is disordered. Positions 273–292 (NESSPSRPRLSSTAYWPQEN) are enriched in polar residues. The span at 336–347 (RKAEDDVYEKTM) shows a compositional bias: basic and acidic residues. The span at 363–372 (SASSTKSGNG) shows a compositional bias: polar residues.

The protein belongs to the protease inhibitor I11 (ecotin) family.

The polypeptide is Ecotin-like protein 3 (Leishmania major).